A 424-amino-acid chain; its full sequence is Enolase (424 aa).

Residue Gln-162 participates in (2R)-2-phosphoglycerate binding. The Proton donor role is filled by Glu-204. Mg(2+)-binding residues include Asp-241, Glu-284, and Asp-311. Lys-336, Arg-365, Ser-366, and Lys-387 together coordinate (2R)-2-phosphoglycerate. Lys-336 functions as the Proton acceptor in the catalytic mechanism.

Belongs to the enolase family. Mg(2+) is required as a cofactor.

The protein localises to the cytoplasm. It is found in the secreted. The protein resides in the cell surface. The enzyme catalyses (2R)-2-phosphoglycerate = phosphoenolpyruvate + H2O. The protein operates within carbohydrate degradation; glycolysis; pyruvate from D-glyceraldehyde 3-phosphate: step 4/5. In terms of biological role, catalyzes the reversible conversion of 2-phosphoglycerate (2-PG) into phosphoenolpyruvate (PEP). It is essential for the degradation of carbohydrates via glycolysis. The sequence is that of Enolase from Rhizobium etli (strain ATCC 51251 / DSM 11541 / JCM 21823 / NBRC 15573 / CFN 42).